A 347-amino-acid polypeptide reads, in one-letter code: GMP reductase (347 aa).

108-131 (ADFEKTKQILAQSPALNFVCIDVA) lines the NADP(+) pocket. Residues Gly181 and Gly183 each contribute to the K(+) site. Cys186 acts as the Thioimidate intermediate in catalysis. NADP(+) is bound at residue 216–239 (IVSDGGCTMPGDVAKAFGGGADFV).

The protein belongs to the IMPDH/GMPR family. GuaC type 1 subfamily. In terms of assembly, homotetramer.

It carries out the reaction IMP + NH4(+) + NADP(+) = GMP + NADPH + 2 H(+). Its function is as follows. Catalyzes the irreversible NADPH-dependent deamination of GMP to IMP. It functions in the conversion of nucleobase, nucleoside and nucleotide derivatives of G to A nucleotides, and in maintaining the intracellular balance of A and G nucleotides. The sequence is that of GMP reductase from Citrobacter koseri (strain ATCC BAA-895 / CDC 4225-83 / SGSC4696).